The primary structure comprises 296 residues: Phosphoribosylaminoimidazole-succinocarboxamide synthase (296 aa).

It belongs to the SAICAR synthetase family.

The enzyme catalyses 5-amino-1-(5-phospho-D-ribosyl)imidazole-4-carboxylate + L-aspartate + ATP = (2S)-2-[5-amino-1-(5-phospho-beta-D-ribosyl)imidazole-4-carboxamido]succinate + ADP + phosphate + 2 H(+). Its pathway is purine metabolism; IMP biosynthesis via de novo pathway; 5-amino-1-(5-phospho-D-ribosyl)imidazole-4-carboxamide from 5-amino-1-(5-phospho-D-ribosyl)imidazole-4-carboxylate: step 1/2. This Syntrophotalea carbinolica (strain DSM 2380 / NBRC 103641 / GraBd1) (Pelobacter carbinolicus) protein is Phosphoribosylaminoimidazole-succinocarboxamide synthase.